Reading from the N-terminus, the 983-residue chain is MRIFSFLFLLLLGILTGQGLVSGTDNGKTTDVTWDKYSLSVKGQRLFVFSGEFHYQRLPVPELWLDVFQKLRANGFNAISVYFFWSFHSASEGEFDFENGAHDIQRLFDYAKEAGLYVIARAGPYCNAETSAGGFALWAANGQMGNERTSDEAYYEKWRPWILEVGKIIAKNQITNGGPVILNQHENELTETTYDPNHTLVVYMKQIAQVFEEAGIVVPSSHNEKGMRGVSWSTDYHNVGGAVNIYGLDSYPGGLSCTNPNSGFRLVRTYYQWFQNYSSTQPSYMPEFEGGWFQPWGGSFYDTCATELSPEFPDVYYKNNIGSRVTLHSIYMTYGGTNWGHSAAPVVYTSYDYAAPLRETREIRDKLKQTKLIGLFTRVSTDLLKTYMEGNGTGYTSDSSIYTWSLRNPDTNAGFYVLAHSTSSARDVTTFSLNATTSAGAISIPDIELNGRQSKIIVTDYNFGTNSTLLFSSAEVLTYANLDVNVLVFYLNVGQKGTFALKDEPKLAFQTYGNSNVTTSESSYGTQYSYTQGEGVTAVKFSNGVLAYLLDKESAWNFFAPPTTSSPQVAPNEHILVQGPYLVRGASINHGTVEITGDNANTTSIEVYTGNSQVKKVKWNGKTIETRKTAYGSLIGTVPGAEDVKIRLPSLDSWKAQDTLPEIQPDYDDSTWTVCNKTTSVNAIAPLSLPVLYSGDYGYHAGTKVYRGRFDGRNVTGANVTVQNGAAAGWAAWVNGQYAGGSAGSPSLAATSAVLTFNGLSLKDRDNVLTVVTDYTGHDQNSVRPKGTQNPRGILGATLTGGGNFTSWRIQGNAGGEKNIDPVRGPMNEGGLYGERMGWHLPGYKVPKSASKSSPLDGVSGAEGRFYTTTFKLKLDKDLDVPIGLQLGAPEGTKAVVQVFMNGYQFGHYLPHTGPQSLFPFPPGVINNRGENTLAISMWALTDAGAKLDKVELVAYGKYRSGFDFNQDWGYLQPGWKDRSQYA.

The first 23 residues, 1–23, serve as a signal peptide directing secretion; it reads MRIFSFLFLLLLGILTGQGLVSG. Substrate contacts are provided by Y82, N127, A128, E129, and N187. Residue E188 is the Proton donor of the active site. N197 carries an N-linked (GlcNAc...) asparagine glycan. Residue Y251 participates in substrate binding. An intrachain disulfide couples C257 to C304. N-linked (GlcNAc...) asparagine glycosylation is present at N276. E287 serves as the catalytic Nucleophile. A substrate-binding site is contributed by Y353. 9 N-linked (GlcNAc...) asparagine glycosylation sites follow: N391, N434, N466, N516, N601, N676, N714, N719, and N804.

It belongs to the glycosyl hydrolase 35 family.

The protein resides in the secreted. The enzyme catalyses Hydrolysis of terminal non-reducing beta-D-galactose residues in beta-D-galactosides.. In terms of biological role, cleaves beta-linked terminal galactosyl residues from gangliosides, glycoproteins, and glycosaminoglycans. The polypeptide is Probable beta-galactosidase C (lacC) (Neosartorya fischeri (strain ATCC 1020 / DSM 3700 / CBS 544.65 / FGSC A1164 / JCM 1740 / NRRL 181 / WB 181) (Aspergillus fischerianus)).